Reading from the N-terminus, the 487-residue chain is Cysteine--tRNA ligase (487 aa).

Cys-27 serves as a coordination point for Zn(2+). The 'HIGH' region motif lies at 29-39; that stretch reads VTVYDLCHIGH. The Zn(2+) site is built by Cys-211, His-236, and Glu-240. The short motif at 268 to 272 is the 'KMSKS' region element; sequence KMSKS. Lys-271 is an ATP binding site.

The protein belongs to the class-I aminoacyl-tRNA synthetase family. Monomer. Zn(2+) is required as a cofactor.

The protein localises to the cytoplasm. It catalyses the reaction tRNA(Cys) + L-cysteine + ATP = L-cysteinyl-tRNA(Cys) + AMP + diphosphate. The sequence is that of Cysteine--tRNA ligase from Thermodesulfovibrio yellowstonii (strain ATCC 51303 / DSM 11347 / YP87).